The sequence spans 354 residues: Glycine betaine/proline betaine transport system permease protein ProW (354 aa).

The interval 1 to 41 is disordered; that stretch reads MADQNNPWDTTPAADSAAQSADAWGTPTTAPTDGGGADWLT. The Cytoplasmic segment spans residues 1-99; it reads MADQNNPWDT…VDYILNGFQQ (99 aa). The span at 13-32 shows a compositional bias: low complexity; it reads AADSAAQSADAWGTPTTAPT. A helical membrane pass occupies residues 100–120; it reads LLLGMPAPVAIIVFALIAWQI. Residue Ser121 is a topological domain, periplasmic. A helical transmembrane segment spans residues 122–142; sequence GVGMGVATLVSLIAIGAIGAW. Over 143 to 148 the chain is Cytoplasmic; it reads SQAMVT. The ABC transmembrane type-1 domain occupies 145 to 324; sequence AMVTLALVLT…ILAIILDRLT (180 aa). Residues 149 to 169 form a helical membrane-spanning segment; sequence LALVLTALLFCIVIGLPLGIW. At 170 to 198 the chain is on the periplasmic side; it reads LARSPRAAKIIRPLLDAMQTTPAFVYLVP. The helical transmembrane segment at 199–219 threads the bilayer; it reads IVMLFGIGNVPGVVVTIIFAL. Topologically, residues 220–270 are cytoplasmic; that stretch reads PPIIRLTILGINQVPADLIEASRSFGASPRQMLFKVQLPLAMPTIMAGVNQ. A helical transmembrane segment spans residues 271 to 291; sequence TLMLALSMVVIASMIAVGGLG. The Periplasmic segment spans residues 292-300; sequence QMVLRGIGR. The helical transmembrane segment at 301 to 321 threads the bilayer; sequence LDMGLATVGGVGIVILAIILD. Over 322–354 the chain is Cytoplasmic; that stretch reads RLTQAVGRDSRSRGNRRWYTTGPVGLLTRPFIK.

The protein belongs to the binding-protein-dependent transport system permease family. CysTW subfamily. In terms of assembly, the complex is composed of two ATP-binding proteins (ProV), two transmembrane proteins (ProW) and a solute-binding protein (ProX).

The protein localises to the cell inner membrane. Functionally, part of the ProU ABC transporter complex involved in glycine betaine and proline betaine uptake. Probably responsible for the translocation of the substrate across the membrane. The chain is Glycine betaine/proline betaine transport system permease protein ProW from Escherichia coli (strain K12).